Consider the following 172-residue polypeptide: Large ribosomal subunit protein uL10 (172 aa).

This sequence belongs to the universal ribosomal protein uL10 family. In terms of assembly, part of the ribosomal stalk of the 50S ribosomal subunit. The N-terminus interacts with L11 and the large rRNA to form the base of the stalk. The C-terminus forms an elongated spine to which L12 dimers bind in a sequential fashion forming a multimeric L10(L12)X complex.

Functionally, forms part of the ribosomal stalk, playing a central role in the interaction of the ribosome with GTP-bound translation factors. The sequence is that of Large ribosomal subunit protein uL10 from Rhizobium meliloti (strain 1021) (Ensifer meliloti).